A 446-amino-acid polypeptide reads, in one-letter code: Tubulin beta-1 chain (446 aa).

Positions 13, 71, 140, 144, 145, 146, 206, and 228 each coordinate GTP. Glu-71 serves as a coordination point for Mg(2+). Residues 421 to 446 are disordered; it reads VSEYQQYQDASADDGEEYEEDAPMEE. Residues 431 to 446 are compositionally biased toward acidic residues; it reads SADDGEEYEEDAPMEE.

It belongs to the tubulin family. In terms of assembly, dimer of alpha and beta chains. A typical microtubule is a hollow water-filled tube with an outer diameter of 25 nm and an inner diameter of 15 nM. Alpha-beta heterodimers associate head-to-tail to form protofilaments running lengthwise along the microtubule wall with the beta-tubulin subunit facing the microtubule plus end conferring a structural polarity. Microtubules usually have 13 protofilaments but different protofilament numbers can be found in some organisms and specialized cells. Mg(2+) is required as a cofactor.

The protein resides in the cytoplasm. It localises to the cytoskeleton. Functionally, tubulin is the major constituent of microtubules, a cylinder consisting of laterally associated linear protofilaments composed of alpha- and beta-tubulin heterodimers. Microtubules grow by the addition of GTP-tubulin dimers to the microtubule end, where a stabilizing cap forms. Below the cap, tubulin dimers are in GDP-bound state, owing to GTPase activity of alpha-tubulin. The chain is Tubulin beta-1 chain (tub1) from Hypocrea rufa (Trichoderma viride).